Reading from the N-terminus, the 225-residue chain is UPF0758 protein Sama_0327 (225 aa).

The MPN domain maps to 102-224 (VLTSPDLTRD…IVSFAERGWI (123 aa)). Positions 173, 175, and 186 each coordinate Zn(2+). Residues 173–186 (HNHPSGVAEPSQAD) carry the JAMM motif motif.

It belongs to the UPF0758 family.

This Shewanella amazonensis (strain ATCC BAA-1098 / SB2B) protein is UPF0758 protein Sama_0327.